The chain runs to 366 residues: S-adenosylmethionine:tRNA ribosyltransferase-isomerase (366 aa).

Belongs to the QueA family. As to quaternary structure, monomer.

The protein resides in the cytoplasm. It catalyses the reaction 7-aminomethyl-7-carbaguanosine(34) in tRNA + S-adenosyl-L-methionine = epoxyqueuosine(34) in tRNA + adenine + L-methionine + 2 H(+). The protein operates within tRNA modification; tRNA-queuosine biosynthesis. Its function is as follows. Transfers and isomerizes the ribose moiety from AdoMet to the 7-aminomethyl group of 7-deazaguanine (preQ1-tRNA) to give epoxyqueuosine (oQ-tRNA). The polypeptide is S-adenosylmethionine:tRNA ribosyltransferase-isomerase (Caulobacter vibrioides (strain ATCC 19089 / CIP 103742 / CB 15) (Caulobacter crescentus)).